The chain runs to 276 residues: Small ribosomal subunit protein uS3 (276 aa).

A KH type-2 domain is found at 38–106 (IRRMMTKGME…QVQLNILEVK (69 aa)). A compositionally biased stretch (low complexity) spans 216–228 (NAAARAGNRPARG). The disordered stretch occupies residues 216–276 (NAAARAGNRP…PAAESTGTEA (61 aa)). Over residues 229-245 (GADRPAGRGGRGGERGG) the composition is skewed to basic and acidic residues. The span at 254–269 (PAAEAPKADAAAAPAA) shows a compositional bias: low complexity.

Belongs to the universal ribosomal protein uS3 family. As to quaternary structure, part of the 30S ribosomal subunit. Forms a tight complex with proteins S10 and S14.

Its function is as follows. Binds the lower part of the 30S subunit head. Binds mRNA in the 70S ribosome, positioning it for translation. The chain is Small ribosomal subunit protein uS3 from Streptomyces griseus subsp. griseus (strain JCM 4626 / CBS 651.72 / NBRC 13350 / KCC S-0626 / ISP 5235).